Consider the following 224-residue polypeptide: Zinc finger C4H2 domain-containing protein (224 aa).

The stretch at 12–97 (ENIKEIRNKT…NKLLESTRRL (86 aa)) forms a coiled coil. 2 disordered regions span residues 166–185 (QAAR…QPPP) and 204–224 (PLCK…KPDE). The C4H2-type zinc-finger motif lies at 189–206 (CLSCHQQIHRNAPICPLC). The span at 208 to 224 (AKSRSRNPKKPKRKPDE) shows a compositional bias: basic residues.

The protein localises to the nucleus. The protein resides in the cytoplasm. It is found in the postsynaptic cell membrane. In terms of biological role, plays a role in GABAergic and V2 interneurons differentiation. Involved in motoneuron development and in neuromuscular junction formation. The sequence is that of Zinc finger C4H2 domain-containing protein (zc4h2) from Danio rerio (Zebrafish).